We begin with the raw amino-acid sequence, 278 residues long: MCRRPDCGFSFSPGPVILLWCCLLLPIVSSAAVSVAPTAAEKVPAECPELTRRCLLGEVFQGDKYESWLRPLVNVTGRDGPLSQLIRYRPVTPEAANSVLLDEAFLDTLALLYNNPDQLRALLTLLSSDTAPRWMTVMRGYSECGDGSPAVYTCVDDLCRGYDLTRLSYGRSIFTEHVLGFELVLPSLFNVVVAIRNEATRTNRAVRLPVSTAAAPEGITLFYGLYNAVKEFCLRHQLDPPLLRHLDKYYAGLPPELKQTRVNLPAHSRYGPQAVDAR.

Positions 1–30 (MCRRPDCGFSFSPGPVILLWCCLLLPIVSS) are cleaved as a signal peptide. In terms of domain architecture, gL betaherpesvirus-type spans 43 to 256 (VPAECPELTR…DKYYAGLPPE (214 aa)). Cys-154 and Cys-159 form a disulfide bridge.

Belongs to the herpesviridae glycoprotein L (gL) family. Betaherpesvirinae gL subfamily. Interacts with glycoprotein H (gH); this interaction is necessary for the correct processing and cell surface expression of gH. Forms the envelope pentamer complex (PC) composed of gH, gL, UL128, UL130, and UL131A. The pentamer interacts with host NRP2. Forms the envelope trimer complex composed of gH, gL, and gO. The trimer interacts with host PDGFRA. The trimer also interacts with host EPHA2.

It is found in the virion membrane. The protein localises to the host cell membrane. Its subcellular location is the host Golgi apparatus. It localises to the host trans-Golgi network. In terms of biological role, the heterodimer glycoprotein H-glycoprotein L is required for the fusion of viral and plasma membranes leading to virus entry into the host cell. Acts as a functional inhibitor of gH and maintains gH in an inhibited form. Upon binding to host integrins, gL dissociates from gH leading to activation of the viral fusion glycoproteins gB and gH. In human cytomegalovirus, forms two distincts complexes to mediate viral entry, a trimer and a pentamer at the surface of the virion envelope. The gH-gL-gO trimer is required for infection in fibroblasts by interacting with host PDGFRA, and in glioblastoma cells by interacting with host EPHA2. The gH-gL-UL128-UL130-UL131A pentamer is essential for viral entry in epithelial, endothelial and myeloid cells via interaction with host NRP2. This Human cytomegalovirus (strain 5160) (HHV-5) protein is Envelope glycoprotein L.